The primary structure comprises 215 residues: Pyrrolidone-carboxylate peptidase (215 aa).

Active-site residues include glutamate 81, cysteine 144, and histidine 168.

Belongs to the peptidase C15 family. Homotetramer.

It is found in the cytoplasm. It carries out the reaction Release of an N-terminal pyroglutamyl group from a polypeptide, the second amino acid generally not being Pro.. Its function is as follows. Removes 5-oxoproline from various penultimate amino acid residues except L-proline. The polypeptide is Pyrrolidone-carboxylate peptidase (pcp) (Bacillus amyloliquefaciens (Bacillus velezensis)).